Here is a 79-residue protein sequence, read N- to C-terminus: Dolichyl-diphosphooligosaccharide--protein glycosyltransferase subunit TMEM258 (79 aa).

2 consecutive transmembrane segments (helical) span residues 19–39 (PLLT…FTMI) and 55–75 (FIAA…LLWV).

It belongs to the OST5 family. As to quaternary structure, component of the oligosaccharyltransferase (OST) complex.

It is found in the membrane. Its pathway is protein modification; protein glycosylation. Subunit of the oligosaccharyl transferase (OST) complex that catalyzes the initial transfer of a defined glycan (Glc(3)Man(9)GlcNAc(2) in eukaryotes) from the lipid carrier dolichol-pyrophosphate to an asparagine residue within an Asn-X-Ser/Thr consensus motif in nascent polypeptide chains, the first step in protein N-glycosylation. N-glycosylation occurs cotranslationally and the complex associates with the Sec61 complex at the channel-forming translocon complex that mediates protein translocation across the endoplasmic reticulum (ER). All subunits are required for a maximal enzyme activity. In Caenorhabditis elegans, this protein is Dolichyl-diphosphooligosaccharide--protein glycosyltransferase subunit TMEM258.